The primary structure comprises 182 residues: FMN reductase (NADH) RutF (182 aa).

The protein belongs to the non-flavoprotein flavin reductase family. RutF subfamily.

The enzyme catalyses FMNH2 + NAD(+) = FMN + NADH + 2 H(+). Functionally, catalyzes the reduction of FMN to FMNH2 which is used to reduce pyrimidine by RutA via the Rut pathway. The protein is FMN reductase (NADH) RutF of Yersinia enterocolitica serotype O:8 / biotype 1B (strain NCTC 13174 / 8081).